A 772-amino-acid polypeptide reads, in one-letter code: Mitochondrial intermediate peptidase (772 aa).

The transit peptide at 1–37 (MLRTIILKAGSNASIPSLSRQNKLLRFFATAGAVSRT) directs the protein to the mitochondrion. Position 558 (H558) interacts with Zn(2+). The active site involves E559. The Zn(2+) site is built by H562 and H565.

The protein belongs to the peptidase M3 family. Zn(2+) serves as cofactor.

Its subcellular location is the mitochondrion matrix. The catalysed reaction is Release of an N-terminal octapeptide as second stage of processing of some proteins imported into the mitochondrion.. With respect to regulation, stimulated by Fe(2+). Cleaves proteins, imported into the mitochondrion, to their mature size. While most mitochondrial precursor proteins are processed to the mature form in one step by mitochondrial processing peptidase (MPP), the sequential cleavage by MIP of an octapeptide after initial processing by MPP is a required step for a subgroup of nuclear-encoded precursor proteins destined for the matrix or the inner membrane. Cleaves precursor proteins of respiratory components, including subunits of the electron transport chain and tricarboxylic acid cycle enzymes, and components of the mitochondrial genetic machinery, including ribosomal proteins, translation factors, and proteins required for mitochondrial DNA metabolism. This Saccharomyces cerevisiae (strain YJM789) (Baker's yeast) protein is Mitochondrial intermediate peptidase (OCT1).